The chain runs to 457 residues: Cysteine--tRNA ligase (457 aa).

Cys28 provides a ligand contact to Zn(2+). Positions Pro30–Asn40 match the 'HIGH' region motif. 3 residues coordinate Zn(2+): Cys212, His237, and Glu241. Residues Lys270–Ser274 carry the 'KMSKS' region motif. Lys273 provides a ligand contact to ATP.

Belongs to the class-I aminoacyl-tRNA synthetase family. As to quaternary structure, monomer. The cofactor is Zn(2+).

The protein localises to the cytoplasm. It carries out the reaction tRNA(Cys) + L-cysteine + ATP = L-cysteinyl-tRNA(Cys) + AMP + diphosphate. This chain is Cysteine--tRNA ligase, found in Wolbachia pipientis wMel.